A 271-amino-acid chain; its full sequence is Phosphoribosylformylglycinamidine synthase subunit PurQ (271 aa).

The region spanning 7 to 253 is the Glutamine amidotransferase type-1 domain; sequence KVAVLRMEGT…FGYQVGRREG (247 aa). The active-site Nucleophile is Cys-104. Residues His-238 and Glu-240 contribute to the active site.

As to quaternary structure, part of the FGAM synthase complex composed of 1 PurL, 1 PurQ and 2 PurS subunits.

It localises to the cytoplasm. The enzyme catalyses N(2)-formyl-N(1)-(5-phospho-beta-D-ribosyl)glycinamide + L-glutamine + ATP + H2O = 2-formamido-N(1)-(5-O-phospho-beta-D-ribosyl)acetamidine + L-glutamate + ADP + phosphate + H(+). It carries out the reaction L-glutamine + H2O = L-glutamate + NH4(+). Its pathway is purine metabolism; IMP biosynthesis via de novo pathway; 5-amino-1-(5-phospho-D-ribosyl)imidazole from N(2)-formyl-N(1)-(5-phospho-D-ribosyl)glycinamide: step 1/2. Functionally, part of the phosphoribosylformylglycinamidine synthase complex involved in the purines biosynthetic pathway. Catalyzes the ATP-dependent conversion of formylglycinamide ribonucleotide (FGAR) and glutamine to yield formylglycinamidine ribonucleotide (FGAM) and glutamate. The FGAM synthase complex is composed of three subunits. PurQ produces an ammonia molecule by converting glutamine to glutamate. PurL transfers the ammonia molecule to FGAR to form FGAM in an ATP-dependent manner. PurS interacts with PurQ and PurL and is thought to assist in the transfer of the ammonia molecule from PurQ to PurL. The chain is Phosphoribosylformylglycinamidine synthase subunit PurQ from Archaeoglobus fulgidus (strain ATCC 49558 / DSM 4304 / JCM 9628 / NBRC 100126 / VC-16).